A 275-amino-acid polypeptide reads, in one-letter code: 4-diphosphocytidyl-2-C-methyl-D-erythritol kinase (275 aa).

Lysine 8 is an active-site residue. ATP is bound at residue 86-96 (PEGAGLGGGSS). The active site involves aspartate 125.

It belongs to the GHMP kinase family. IspE subfamily.

It catalyses the reaction 4-CDP-2-C-methyl-D-erythritol + ATP = 4-CDP-2-C-methyl-D-erythritol 2-phosphate + ADP + H(+). It functions in the pathway isoprenoid biosynthesis; isopentenyl diphosphate biosynthesis via DXP pathway; isopentenyl diphosphate from 1-deoxy-D-xylulose 5-phosphate: step 3/6. In terms of biological role, catalyzes the phosphorylation of the position 2 hydroxy group of 4-diphosphocytidyl-2C-methyl-D-erythritol. The polypeptide is 4-diphosphocytidyl-2-C-methyl-D-erythritol kinase (Thermus thermophilus (strain ATCC BAA-163 / DSM 7039 / HB27)).